The sequence spans 327 residues: Sideroflexin-2 (327 aa).

The next 5 membrane-spanning stretches (helical) occupy residues 99 to 119 (GMLI…VVLW), 143 to 163 (VTQL…AAIG), 175 to 195 (LFQR…NIPL), 228 to 248 (EVVV…PLIM), and 267 to 287 (FQTL…CALF).

This sequence belongs to the sideroflexin family.

The protein resides in the mitochondrion membrane. It catalyses the reaction L-serine(in) = L-serine(out). Mitochondrial amino-acid transporter that mediates transport of serine into mitochondria. The protein is Sideroflexin-2 of Drosophila melanogaster (Fruit fly).